A 994-amino-acid polypeptide reads, in one-letter code: Glycine dehydrogenase (decarboxylating), mitochondrial (994 aa).

Residues 1 to 21 (MLKLLRNNGINKLKSNLIRNY) constitute a mitochondrion transit peptide. At Lys742 the chain carries N6-(pyridoxal phosphate)lysine.

Belongs to the GcvP family. As to quaternary structure, homodimer. The glycine cleavage system is composed of four proteins: P, T, L and H. Pyridoxal 5'-phosphate is required as a cofactor.

Its subcellular location is the mitochondrion. The enzyme catalyses N(6)-[(R)-lipoyl]-L-lysyl-[glycine-cleavage complex H protein] + glycine + H(+) = N(6)-[(R)-S(8)-aminomethyldihydrolipoyl]-L-lysyl-[glycine-cleavage complex H protein] + CO2. The glycine cleavage system catalyzes the degradation of glycine. The P protein binds the alpha-amino group of glycine through its pyridoxal phosphate cofactor; CO(2) is released and the remaining methylamine moiety is then transferred to the lipoamide cofactor of the H protein. This chain is Glycine dehydrogenase (decarboxylating), mitochondrial (gcvP), found in Dictyostelium discoideum (Social amoeba).